The sequence spans 180 residues: MFPMVTGFMSYGQQTIRATRYIGQSFITTLSHTNRLPITIHYPYEKSITPERFRGRIHFEFDKCIACEVCVRVCPIDLPVVDWRFEKDIKRKQLLNYSIDFGVCIFCGNCVEYCPTSCLSMTEEYELSTYDRHELNYNQIALSRLPISIMEDYTIQTIRNSTKSKIDEDKSSNSRTITDY.

4Fe-4S ferredoxin-type domains are found at residues 55–84 (GRIH…VDWR) and 95–124 (LNYS…MTEE). The [4Fe-4S] cluster site is built by Cys-64, Cys-67, Cys-70, Cys-74, Cys-104, Cys-107, Cys-110, and Cys-114.

This sequence belongs to the complex I 23 kDa subunit family. In terms of assembly, NDH is composed of at least 16 different subunits, 5 of which are encoded in the nucleus. Requires [4Fe-4S] cluster as cofactor.

It is found in the plastid. It localises to the chloroplast thylakoid membrane. The enzyme catalyses a plastoquinone + NADH + (n+1) H(+)(in) = a plastoquinol + NAD(+) + n H(+)(out). It catalyses the reaction a plastoquinone + NADPH + (n+1) H(+)(in) = a plastoquinol + NADP(+) + n H(+)(out). In terms of biological role, NDH shuttles electrons from NAD(P)H:plastoquinone, via FMN and iron-sulfur (Fe-S) centers, to quinones in the photosynthetic chain and possibly in a chloroplast respiratory chain. The immediate electron acceptor for the enzyme in this species is believed to be plastoquinone. Couples the redox reaction to proton translocation, and thus conserves the redox energy in a proton gradient. The polypeptide is NAD(P)H-quinone oxidoreductase subunit I, chloroplastic (Agrostis stolonifera (Creeping bentgrass)).